Consider the following 90-residue polypeptide: MNIKPLADRVLILPAPAEEKTIGGIIIPDTAKEKPLQGEVVAIGNGTKDEEMVLHVGDQVLYGKYSGTELEHDGKKYLIMRQSDVLAVLG.

This sequence belongs to the GroES chaperonin family. In terms of assembly, heptamer of 7 subunits arranged in a ring. Interacts with the chaperonin GroEL.

The protein localises to the cytoplasm. Functionally, together with the chaperonin GroEL, plays an essential role in assisting protein folding. The GroEL-GroES system forms a nano-cage that allows encapsulation of the non-native substrate proteins and provides a physical environment optimized to promote and accelerate protein folding. GroES binds to the apical surface of the GroEL ring, thereby capping the opening of the GroEL channel. The chain is Co-chaperonin GroES from Phocaeicola vulgatus (strain ATCC 8482 / DSM 1447 / JCM 5826 / CCUG 4940 / NBRC 14291 / NCTC 11154) (Bacteroides vulgatus).